The following is a 453-amino-acid chain: Ribosome biogenesis protein YTM1 (453 aa).

The segment at 8-89 (VKLRFFTREQ…ETFLNVEYTR (82 aa)) is ubiquitin-like (UBL) domain. The sufficient for interaction with ERB1 and association with 66S pre-ribosomes stretch occupies residues 99–453 (SFSNEDWVSS…INKGDNIFKS (355 aa)). WD repeat units follow at residues 101–139 (SNED…EKQY), 141–179 (GHSA…LKQP), 199–237 (GHKA…MTVV), 278–318 (SHTG…CIDT), 320–359 (TTSY…TSKI), 366–406 (GHKN…PMYT), and 417–453 (GVND…IFKS).

This sequence belongs to the WD repeat WDR12/YTM1 family. In terms of assembly, component of the NOP7 complex, composed of ERB1, NOP7 and YTM1. The complex is held together by ERB1, which interacts with NOP7 via its N-terminal domain and with YTM1 via a high-affinity interaction between the seven-bladed beta-propeller domains of the 2 proteins. The NOP7 complex associates with the 66S pre-ribosome. Interacts (via UBL domain) with MDN1 (via VWFA/MIDAS domain).

It is found in the nucleus. Its subcellular location is the nucleolus. The protein localises to the nucleoplasm. Its function is as follows. Component of the NOP7 complex, which is required for maturation of the 25S and 5.8S ribosomal RNAs and formation of the 60S ribosome. This chain is Ribosome biogenesis protein YTM1, found in Vanderwaltozyma polyspora (strain ATCC 22028 / DSM 70294 / BCRC 21397 / CBS 2163 / NBRC 10782 / NRRL Y-8283 / UCD 57-17) (Kluyveromyces polysporus).